Reading from the N-terminus, the 1988-residue chain is Protein Ycf2 (1988 aa).

1337 to 1344 (GSIGTGRS) serves as a coordination point for ATP. Positions 1377 to 1396 (SDDDSDDIDDSGDIDDSDDI) are disordered.

Belongs to the Ycf2 family.

Its subcellular location is the plastid. The protein localises to the chloroplast stroma. In terms of biological role, probable ATPase of unknown function. Its presence in a non-photosynthetic plant (Epifagus virginiana) and experiments in tobacco indicate that it has an essential function which is probably not related to photosynthesis. The sequence is that of Protein Ycf2 from Cucumis sativus (Cucumber).